The following is a 167-amino-acid chain: Ribosome maturation factor RimM (167 aa).

Residues Glu94–Leu167 enclose the PRC barrel domain.

The protein belongs to the RimM family. As to quaternary structure, binds ribosomal protein uS19.

It is found in the cytoplasm. An accessory protein needed during the final step in the assembly of 30S ribosomal subunit, possibly for assembly of the head region. Essential for efficient processing of 16S rRNA. May be needed both before and after RbfA during the maturation of 16S rRNA. It has affinity for free ribosomal 30S subunits but not for 70S ribosomes. The chain is Ribosome maturation factor RimM from Thermoanaerobacter pseudethanolicus (strain ATCC 33223 / 39E) (Clostridium thermohydrosulfuricum).